We begin with the raw amino-acid sequence, 257 residues long: MEIKRLPALSDNYIFLLYDADTQTAAVVDPAEPTPVLECLNKLGAQLVAIFNTHHHYDHVGANNQLQQYFPNLCIYGGSEDRGRIPGQQVFLKEGDRVEFGQRVGEVLFVPGHTRAHIAYYFPPKLSQETGELFCGDTLFGGGCGRLFEGTPTQMVNSLTKLRNLPDNTRVWCAHEYTLKNLQFALTVDPDNLVLKNRYHQVKEFRHQGQATVPSILGEEKLTNPFLRWDNSAIQLTIGMTDPARVFGKLRGMKDTF.

His-54, His-56, Asp-58, His-59, His-113, Asp-137, and His-175 together coordinate Zn(2+).

It belongs to the metallo-beta-lactamase superfamily. Glyoxalase II family. Monomer. The cofactor is Zn(2+).

It catalyses the reaction an S-(2-hydroxyacyl)glutathione + H2O = a 2-hydroxy carboxylate + glutathione + H(+). It functions in the pathway secondary metabolite metabolism; methylglyoxal degradation; (R)-lactate from methylglyoxal: step 2/2. In terms of biological role, thiolesterase that catalyzes the hydrolysis of S-D-lactoyl-glutathione to form glutathione and D-lactic acid. The polypeptide is Hydroxyacylglutathione hydrolase (Rippkaea orientalis (strain PCC 8801 / RF-1) (Cyanothece sp. (strain PCC 8801))).